Reading from the N-terminus, the 232-residue chain is Endonuclease NucS (232 aa).

This sequence belongs to the NucS endonuclease family.

It is found in the cytoplasm. Cleaves both 3' and 5' ssDNA extremities of branched DNA structures. This is Endonuclease NucS from Mycobacteroides abscessus (strain ATCC 19977 / DSM 44196 / CCUG 20993 / CIP 104536 / JCM 13569 / NCTC 13031 / TMC 1543 / L948) (Mycobacterium abscessus).